The chain runs to 361 residues: MKQIIVNLKTKKYDIVISQSENDFFTALAKAAKTNMFFVITDKNVEKLHLKYFTVLLKRKGFNVKTAVISAGEIGKNIKSLSFLYDKALEAGIDRKSCAIALGGGVIGDVAGFFAATYMRGINYIQVPTTLLAMTDSSVGGKTAVNIKGGKNIAGVFYQPDLVWINSAFLSTLTERHIKNGLAEIIKYAFTFDKKFYSYLSDTLENGTVPPKDFEYIIYQSCSYKARVVEKDEKEITGLRAVLNFGHTFAHALETATKYKKFLHGEAVAVGMLFAVKLSLKLRICKPETYKEVENLLQKADFTLSTKNNARQMLSLMKKDKKSIDGNIKFILIKDIGKAVSTYVKDNVVLNVLKNFTGENK.

NAD(+) contacts are provided by residues 105-109 (GVIGD), 129-130 (TT), Lys-142, Lys-151, and 169-172 (FLST). Zn(2+)-binding residues include Glu-184, His-247, and His-264.

The protein belongs to the sugar phosphate cyclases superfamily. Dehydroquinate synthase family. Requires Co(2+) as cofactor. It depends on Zn(2+) as a cofactor. NAD(+) is required as a cofactor.

The protein resides in the cytoplasm. The enzyme catalyses 7-phospho-2-dehydro-3-deoxy-D-arabino-heptonate = 3-dehydroquinate + phosphate. The protein operates within metabolic intermediate biosynthesis; chorismate biosynthesis; chorismate from D-erythrose 4-phosphate and phosphoenolpyruvate: step 2/7. Its function is as follows. Catalyzes the conversion of 3-deoxy-D-arabino-heptulosonate 7-phosphate (DAHP) to dehydroquinate (DHQ). This Endomicrobium trichonymphae protein is 3-dehydroquinate synthase.